Consider the following 278-residue polypeptide: Betaine--homocysteine S-methyltransferase 1 (278 aa).

Residues 11–278 (KGILERLNSG…FGLEPRVATR (268 aa)) form the Hcy-binding domain. An N6-succinyllysine mark is found at lysine 40, lysine 93, and lysine 98. A Zn(2+)-binding site is contributed by cysteine 217. Residues lysine 232 and lysine 241 each carry the N6-succinyllysine modification.

In terms of assembly, homotetramer. The cofactor is Zn(2+). As to expression, found exclusively in liver and kidney.

The protein resides in the cytoplasm. The protein localises to the cytosol. It is found in the nucleus. It catalyses the reaction L-homocysteine + glycine betaine = N,N-dimethylglycine + L-methionine. It functions in the pathway amine and polyamine degradation; betaine degradation; sarcosine from betaine: step 1/2. Its pathway is amino-acid biosynthesis; L-methionine biosynthesis via de novo pathway; L-methionine from L-homocysteine (BhmT route): step 1/1. Its activity is regulated as follows. Inhibited by dimethylglycine and methylthioacetate. Its function is as follows. Involved in the regulation of homocysteine metabolism. Converts betaine and homocysteine to dimethylglycine and methionine, respectively. This reaction is also required for the irreversible oxidation of choline. The protein is Betaine--homocysteine S-methyltransferase 1 of Sus scrofa (Pig).